Here is a 167-residue protein sequence, read N- to C-terminus: Sulfopyruvate decarboxylase subunit alpha (167 aa).

It belongs to the ComD family. Heterododecamer composed of 6 subunits alpha and 6 subunits beta.

The catalysed reaction is 3-sulfopyruvate + H(+) = sulfoacetaldehyde + CO2. It participates in cofactor biosynthesis; coenzyme M biosynthesis; sulfoacetaldehyde from phosphoenolpyruvate and sulfite: step 4/4. Involved in the biosynthesis of the coenzyme M (2-mercaptoethanesulfonic acid). Catalyzes the decarboxylation of sulfopyruvate to sulfoacetaldehyde. This Methanococcus maripaludis (strain DSM 14266 / JCM 13030 / NBRC 101832 / S2 / LL) protein is Sulfopyruvate decarboxylase subunit alpha (comD).